Consider the following 294-residue polypeptide: Glucosamine kinase GspK (294 aa).

Threonine 12 is an ATP binding site. Residue aspartate 101 participates in substrate binding. Threonine 122 lines the ATP pocket. Residues 139–141 (GRE) and aspartate 146 contribute to the substrate site. Residue glycine 202 participates in ATP binding.

The protein belongs to the eukaryotic-type N-acetylglucosamine kinase family.

It localises to the cytoplasm. The enzyme catalyses D-glucosamine + ATP = D-glucosamine 6-phosphate + ADP + H(+). In terms of biological role, ATP-dependent kinase, which is specific for glucosamine. Does not show kinase activity with any other sugar. This chain is Glucosamine kinase GspK (gspK), found in Vibrio cholerae serotype O1 (strain ATCC 39315 / El Tor Inaba N16961).